A 24-amino-acid polypeptide reads, in one-letter code: Alpha-lactalbumin (24 aa).

Belongs to the glycosyl hydrolase 22 family. In terms of assembly, lactose synthase (LS) is a heterodimer of a catalytic component, beta1,4-galactosyltransferase (beta4Gal-T1) and a regulatory component, alpha-lactalbumin (LA). Post-translationally, glycosylated (50% of the proteins). As to expression, mammary gland specific. Secreted in milk.

It is found in the secreted. Its function is as follows. Regulatory subunit of lactose synthase, changes the substrate specificity of galactosyltransferase in the mammary gland making glucose a good acceptor substrate for this enzyme. This enables LS to synthesize lactose, the major carbohydrate component of milk. In other tissues, galactosyltransferase transfers galactose onto the N-acetylglucosamine of the oligosaccharide chains in glycoproteins. This Felis catus (Cat) protein is Alpha-lactalbumin (LALBA).